The following is a 138-amino-acid chain: ATP synthase epsilon chain (138 aa).

This sequence belongs to the ATPase epsilon chain family. F-type ATPases have 2 components, CF(1) - the catalytic core - and CF(0) - the membrane proton channel. CF(1) has five subunits: alpha(3), beta(3), gamma(1), delta(1), epsilon(1). CF(0) has three main subunits: a, b and c.

It localises to the cell membrane. Functionally, produces ATP from ADP in the presence of a proton gradient across the membrane. The chain is ATP synthase epsilon chain from Streptococcus suis (strain 98HAH33).